Consider the following 397-residue polypeptide: Homocitrate synthase AksA (397 aa).

Residues 19 to 270 form the Pyruvate carboxyltransferase domain; that stretch reads VIVYDTTLRD…DPGFNTEVLA (252 aa).

It belongs to the alpha-IPM synthase/homocitrate synthase family.

It carries out the reaction acetyl-CoA + 2-oxoglutarate + H2O = (2R)-homocitrate + CoA + H(+). The enzyme catalyses 2-oxoadipate + acetyl-CoA + H2O = (R)-dihomocitrate + CoA + H(+). It catalyses the reaction 2-oxoheptanedioate + acetyl-CoA + H2O = (R)-trihomocitrate + CoA + H(+). It functions in the pathway organic acid metabolism; 2-oxosuberate biosynthesis. Catalyzes the condensation of alpha-ketoglutarate and acetyl-CoA to form (R)-homocitrate. Can also catalyze the condensation of alpha-ketoadipate with acetyl-CoA to form (R)-homo(2)citrate, and the condensation of alpha-ketopimelate with acetyl-CoA to form (R)-homo(3)citrate. These reactions are part of the biosynthesis pathway of coenzyme B and biotin. The sequence is that of Homocitrate synthase AksA (aksA) from Methanopyrus kandleri (strain AV19 / DSM 6324 / JCM 9639 / NBRC 100938).